The following is a 440-amino-acid chain: Thymidine phosphorylase (440 aa).

It belongs to the thymidine/pyrimidine-nucleoside phosphorylase family. Homodimer.

It catalyses the reaction thymidine + phosphate = 2-deoxy-alpha-D-ribose 1-phosphate + thymine. The protein operates within pyrimidine metabolism; dTMP biosynthesis via salvage pathway; dTMP from thymine: step 1/2. The enzymes which catalyze the reversible phosphorolysis of pyrimidine nucleosides are involved in the degradation of these compounds and in their utilization as carbon and energy sources, or in the rescue of pyrimidine bases for nucleotide synthesis. This chain is Thymidine phosphorylase, found in Salmonella heidelberg (strain SL476).